We begin with the raw amino-acid sequence, 201 residues long: Peptide deformylase (201 aa).

The Fe cation site is built by C114 and H156. The active site involves E157. H160 serves as a coordination point for Fe cation.

It belongs to the polypeptide deformylase family. The cofactor is Fe(2+).

The enzyme catalyses N-terminal N-formyl-L-methionyl-[peptide] + H2O = N-terminal L-methionyl-[peptide] + formate. Functionally, removes the formyl group from the N-terminal Met of newly synthesized proteins. Requires at least a dipeptide for an efficient rate of reaction. N-terminal L-methionine is a prerequisite for activity but the enzyme has broad specificity at other positions. The protein is Peptide deformylase of Tropheryma whipplei (strain TW08/27) (Whipple's bacillus).